We begin with the raw amino-acid sequence, 501 residues long: Lysine--tRNA ligase (501 aa).

The Mg(2+) site is built by glutamate 404 and glutamate 411.

It belongs to the class-II aminoacyl-tRNA synthetase family. As to quaternary structure, homodimer. Mg(2+) is required as a cofactor.

It localises to the cytoplasm. The enzyme catalyses tRNA(Lys) + L-lysine + ATP = L-lysyl-tRNA(Lys) + AMP + diphosphate. This chain is Lysine--tRNA ligase, found in Campylobacter jejuni subsp. doylei (strain ATCC BAA-1458 / RM4099 / 269.97).